Here is a 393-residue protein sequence, read N- to C-terminus: Protein TsgA homolog (393 aa).

A run of 12 helical transmembrane segments spans residues 11–31 (WISF…GMVM), 51–71 (FLNA…EIIP), 78–98 (FGFV…SLAL), 101–121 (AAMF…TFLI), 134–154 (LLFT…VAAY), 162–182 (WYWV…LTFG), 206–226 (IGVL…LGFI), 245–265 (TLVS…SFIL), 273–293 (ILTV…KAQP), 297–317 (AWFI…IITL), 332–352 (FVLT…GPIV), and 361–381 (LLTA…LGFV).

The protein belongs to the major facilitator superfamily. TsgA family.

The protein localises to the cell inner membrane. The chain is Protein TsgA homolog from Citrobacter koseri (strain ATCC BAA-895 / CDC 4225-83 / SGSC4696).